We begin with the raw amino-acid sequence, 348 residues long: D-alanine--D-alanine ligase (348 aa).

Residues 136–341 (KYLLQTVGIP…YSDLIEELIQ (206 aa)) form the ATP-grasp domain. 169–224 (EGSLIYPVFVKPANMGSSVGISKVENREELQEALEEAFRYDARAIVEQGIEAREIE) serves as a coordination point for ATP. Mg(2+) contacts are provided by D295, E308, and N310.

This sequence belongs to the D-alanine--D-alanine ligase family. It depends on Mg(2+) as a cofactor. Mn(2+) is required as a cofactor.

The protein localises to the cytoplasm. It catalyses the reaction 2 D-alanine + ATP = D-alanyl-D-alanine + ADP + phosphate + H(+). It participates in cell wall biogenesis; peptidoglycan biosynthesis. Its function is as follows. Cell wall formation. This chain is D-alanine--D-alanine ligase (ddl), found in Enterococcus faecalis (strain ATCC 700802 / V583).